The primary structure comprises 384 residues: NAD(P) transhydrogenase subunit alpha part 1 (384 aa).

Residues 126–136 (PRISRAQSMDI) form an RQD loop; involved in interaction with PntB region. Residues 127–129 (RIS), 132–135 (QSMD), 180–182 (VGV), 202–204 (DVR), G234, Q247, and L266 each bind NAD(+).

This sequence belongs to the AlaDH/PNT family. Heterotrimer of two alpha chains and a beta (PntB) chain; in Rhodospirillum, the alpha chain is made of two subunits (PntAA and PntAB) and forms a dimer.

The catalysed reaction is NAD(+) + NADPH + H(+)(in) = NADH + NADP(+) + H(+)(out). Functionally, the transhydrogenation between NADH and NADP is coupled to respiration and ATP hydrolysis and functions as a proton pump across the membrane. This is NAD(P) transhydrogenase subunit alpha part 1 (pntAA) from Rhodospirillum rubrum (strain ATCC 11170 / ATH 1.1.1 / DSM 467 / LMG 4362 / NCIMB 8255 / S1).